We begin with the raw amino-acid sequence, 28 residues long: Conotoxin Cl6a (28 aa).

Cystine bridges form between cysteine 3–cysteine 13, cysteine 7–cysteine 19, and cysteine 12–cysteine 24.

In terms of tissue distribution, expressed by the venom duct.

The protein localises to the secreted. The protein is Conotoxin Cl6a of Californiconus californicus (California cone).